A 413-amino-acid polypeptide reads, in one-letter code: PCI domain-containing protein 2 homolog (413 aa).

The PCI domain occupies 222–403; it reads VAYNYFLGRK…QKLVISKTNA (182 aa).

This sequence belongs to the CSN12 family.

This is PCI domain-containing protein 2 homolog from Caenorhabditis briggsae.